A 246-amino-acid chain; its full sequence is Aquaporin SIP1-1 (246 aa).

The next 2 helical transmembrane spans lie at 13–33 and 45–65; these read AAVT…TAAV and YALL…NLLC. The short motif at 74–76 is the NPA 1 element; that stretch reads NPT. 3 helical membrane-spanning segments follow: residues 95–115, 139–159, and 166–186; these read FPLA…AMAI, GAAA…WIIV, and IVKT…GAAY. Positions 192–194 match the NPA 2 motif; sequence NPA. Residues 214–234 traverse the membrane as a helical segment; sequence VYWICPFVGAVLAAWVFRAVF.

The protein belongs to the MIP/aquaporin (TC 1.A.8) family. SIP (TC 1.A.8.10) subfamily. As to expression, expressed in roots, leaves and anthers.

It localises to the membrane. In terms of biological role, aquaporins facilitate the transport of water and small neutral solutes across cell membranes. The chain is Aquaporin SIP1-1 (SIP1-1) from Oryza sativa subsp. japonica (Rice).